A 532-amino-acid chain; its full sequence is MPLLHPQSLRHPSFEIQTQRRSNSTTRLLLSHKFLHSQASIISISRTRILKRVSQNLSVAKAASAQASSSVGESVAQTSEKDVLKALSQIIDPDFGTDIVSCGFVKDLGINEALGEVSFRLELTTPACPVKDMFENKANEVVAALPWVKKVNVTMSAQPAKPIFAGQLPFGLSRISNIIAVSSCKGGVGKSTVAVNLAYTLAGMGARVGIFDADVYGPSLPTMVNPESRILEMNPEKKTIIPTEYMGVKLVSFGFAGQGRAIMRGPMVSGVINQLLTTTEWGELDYLVIDMPPGTGDIQLTLCQVAPLTAAVIVTTPQKLAFIDVAKGVRMFSKLKVPCVAVVENMCHFDADGKRYYPFGKGSGSEVVKQFGIPHLFDLPIRPTLSASGDSGTPEVVSDPLSDVARTFQDLGVCVVQQCAKIRQQVSTAVTYDKYLKAIRVKVPNSDEEFLLHPATVRRNDRSAQSVDEWTGEQKVLYGDVAEDIEPEDIRPMGNYAVSITWPDGFSQIAPYDQLEEIERLVDVPPLSPVEV.

A chloroplast-targeting transit peptide spans M1–K61. Position 62 is an N-acetylalanine (A62). C184–S191 serves as a coordination point for ATP.

It belongs to the Mrp/NBP35 ATP-binding proteins family. It depends on [4Fe-4S] cluster as a cofactor. As to expression, expressed in aerial tissues exposed to light. Very low expression in roots.

The protein resides in the plastid. It is found in the chloroplast stroma. Its function is as follows. Required for photosystem I (PSI) biosynthesis and assembly. May serve as a chloroplast scaffold protein that specifically assembles iron-sulfur (4Fe-4S) clusters and transfers them to the chloroplast PSI and ferredoxin-thioredoxin (FTR) complexes. Can assemble a 4Fe-4S cluster and transfer it to apoproteins in yeast cells. Probably not required for assembly or stability of plastidic 2Fe-2S clusters. In Arabidopsis thaliana (Mouse-ear cress), this protein is Fe-S cluster assembly factor HCF101, chloroplastic (HCF101).